A 179-amino-acid chain; its full sequence is Large ribosomal subunit protein uL6 (179 aa).

Belongs to the universal ribosomal protein uL6 family. As to quaternary structure, part of the 50S ribosomal subunit.

Its function is as follows. This protein binds to the 23S rRNA, and is important in its secondary structure. It is located near the subunit interface in the base of the L7/L12 stalk, and near the tRNA binding site of the peptidyltransferase center. This chain is Large ribosomal subunit protein uL6, found in Nocardioides sp. (strain ATCC BAA-499 / JS614).